We begin with the raw amino-acid sequence, 226 residues long: Cytidylate kinase (226 aa).

Glycine 10 to threonine 18 contributes to the ATP binding site.

Belongs to the cytidylate kinase family. Type 1 subfamily.

It localises to the cytoplasm. The enzyme catalyses CMP + ATP = CDP + ADP. The catalysed reaction is dCMP + ATP = dCDP + ADP. In Streptococcus thermophilus (strain ATCC BAA-491 / LMD-9), this protein is Cytidylate kinase.